A 487-amino-acid chain; its full sequence is Berbamunine synthase (487 aa).

Cys-429 contributes to the heme binding site.

The protein belongs to the cytochrome P450 family. It depends on heme as a cofactor.

The protein resides in the endoplasmic reticulum membrane. The protein localises to the microsome membrane. The enzyme catalyses (R)-N-methylcoclaurine + (S)-N-methylcoclaurine + reduced [NADPH--hemoprotein reductase] + O2 = berbamunine + oxidized [NADPH--hemoprotein reductase] + 2 H2O + H(+). The protein operates within alkaloid biosynthesis; berbamunine biosynthesis; berbamunine from (R)-N-methylcoclaurine and (S)-N-methylcoclaurine: step 1/1. Functionally, forms the bisbenzylisoquinoline alkaloid berbamunine by phenol oxidation of N-methylcoclaurine without the incorporation of oxygen into the product. Oxidatively couples either two molecules of (R)-N-methylcoclaurine to form the (R,R) dimer guattegaumerine or one molecule each of (R)- and (S)-N-methylcoclaurine to form the (R,S) dimer berbamunine. In Berberis stolonifera (Barberry), this protein is Berbamunine synthase (CYP80A1).